Consider the following 377-residue polypeptide: Molybdenum import ATP-binding protein ModC (377 aa).

The region spanning 17 to 254 is the ABC transporter domain; it reads ITGDEAIRAR…LDLPFAHDED (238 aa). Position 52–59 (52–59) interacts with ATP; it reads GHSGSGKT. The region spanning 313–377 is the Mop domain; the sequence is DSSILNVLPA…AQVKGVALLR (65 aa).

It belongs to the ABC transporter superfamily. Molybdate importer (TC 3.A.1.8) family. The complex is composed of two ATP-binding proteins (ModC), two transmembrane proteins (ModB) and a solute-binding protein (ModA).

The protein resides in the cell inner membrane. It catalyses the reaction molybdate(out) + ATP + H2O = molybdate(in) + ADP + phosphate + H(+). Functionally, part of the ABC transporter complex ModABC involved in molybdenum import. Responsible for energy coupling to the transport system. This is Molybdenum import ATP-binding protein ModC from Aromatoleum aromaticum (strain DSM 19018 / LMG 30748 / EbN1) (Azoarcus sp. (strain EbN1)).